The sequence spans 1223 residues: Rho family-interacting cell polarization regulator 1 (1223 aa).

Serine 22 is modified (phosphoserine). The stretch at 89-114 forms a coiled coil; it reads LTAYLEVHQQEQEKLQGQIRESKRNS. Serine 349 and serine 351 each carry phosphoserine. At threonine 355 the chain carries Phosphothreonine. The interval 375–411 is disordered; that stretch reads NGTAWSLSSESSDDSSSPQLSGTARHSPAPRPLVQQP. Over residues 380–395 the composition is skewed to low complexity; the sequence is SLSSESSDDSSSPQLS. 2 positions are modified to phosphoserine: serine 456 and serine 459. Disordered stretches follow at residues 475 to 769 and 856 to 889; these read ESLA…APQH and FLNEDEDEDNDVPGDRPPSSPEAGAEDSIDSPSA. 2 stretches are compositionally biased toward low complexity: residues 505–523 and 546–564; these read GHSATSSTLGTTGSVPTST and PGPTHTTTGSTYSAITTTH. The segment covering 565–592 has biased composition (polar residues); sequence SAPSPLTHTTTGSTHKPIISTLTTTGPT. Low complexity-rich tracts occupy residues 601–650 and 659–675; these read TTTS…PTPS and TSPTHPTTSPTHPTTSP. The span at 680–695 shows a compositional bias: polar residues; that stretch reads VSPSTSLELATLSSPS. Over residues 858–867 the composition is skewed to acidic residues; sequence NEDEDEDNDV. Serine 874 and serine 875 each carry phosphoserine.

Belongs to the RIPOR family. Interacts (via N-terminus) with RHOA (GTP-bound form); this interaction links active RHOA to STK24 and STK26 kinases. Interacts with RHOB. Interacts with RHOC. Interacts (via C-terminus) with PDCD10; this interaction occurs in a Rho-independent manner. Interacts (via C-terminus) with STK24; this interaction occurs in a PDCD10-dependent and Rho-independent manner. Interacts (via C-terminus) with STK26; this interaction occurs in a PDCD10-dependent and Rho-independent manner. Interacts (via N-terminus) with 14-3-3 proteins; these interactions occur in a Rho-dependent manner.

It is found in the cytoplasm. The protein localises to the golgi apparatus. Functionally, downstream effector protein for Rho-type small GTPases that plays a role in cell polarity and directional migration. Acts as an adapter protein, linking active Rho proteins to STK24 and STK26 kinases, and hence positively regulates Golgi reorientation in polarized cell migration upon Rho activation. Involved in the subcellular relocation of STK26 from the Golgi to cytoplasm punctae in a Rho- and PDCD10-dependent manner upon serum stimulation. This is Rho family-interacting cell polarization regulator 1 (RIPOR1) from Homo sapiens (Human).